The following is a 302-amino-acid chain: Protoheme IX farnesyltransferase 1 (302 aa).

Transmembrane regions (helical) follow at residues 27 to 47, 49 to 69, 98 to 118, 121 to 141, 149 to 169, 175 to 195, 228 to 248, and 281 to 301; these read VVAL…VTDF, WIQA…AAAF, SVAI…YAWV, LTAW…TMYL, IVIA…AVTG, AWLL…ALAI, LLTL…IYLF, and IYHL…GMVL.

It belongs to the UbiA prenyltransferase family. Protoheme IX farnesyltransferase subfamily.

It is found in the cell inner membrane. It carries out the reaction heme b + (2E,6E)-farnesyl diphosphate + H2O = Fe(II)-heme o + diphosphate. It functions in the pathway porphyrin-containing compound metabolism; heme O biosynthesis; heme O from protoheme: step 1/1. Its function is as follows. Converts heme B (protoheme IX) to heme O by substitution of the vinyl group on carbon 2 of heme B porphyrin ring with a hydroxyethyl farnesyl side group. This chain is Protoheme IX farnesyltransferase 1, found in Vibrio parahaemolyticus serotype O3:K6 (strain RIMD 2210633).